The chain runs to 162 residues: 6,7-dimethyl-8-ribityllumazine synthase (162 aa).

5-amino-6-(D-ribitylamino)uracil-binding positions include Phe-22, 56-58, and 80-82; these read TFE and AVI. 85 to 86 contacts (2S)-2-hydroxy-3-oxobutyl phosphate; the sequence is GT. Residue His-88 is the Proton donor of the active site. Met-113 serves as a coordination point for 5-amino-6-(D-ribitylamino)uracil. Arg-127 contributes to the (2S)-2-hydroxy-3-oxobutyl phosphate binding site.

It belongs to the DMRL synthase family.

It carries out the reaction (2S)-2-hydroxy-3-oxobutyl phosphate + 5-amino-6-(D-ribitylamino)uracil = 6,7-dimethyl-8-(1-D-ribityl)lumazine + phosphate + 2 H2O + H(+). It functions in the pathway cofactor biosynthesis; riboflavin biosynthesis; riboflavin from 2-hydroxy-3-oxobutyl phosphate and 5-amino-6-(D-ribitylamino)uracil: step 1/2. Functionally, catalyzes the formation of 6,7-dimethyl-8-ribityllumazine by condensation of 5-amino-6-(D-ribitylamino)uracil with 3,4-dihydroxy-2-butanone 4-phosphate. This is the penultimate step in the biosynthesis of riboflavin. This Anaeromyxobacter dehalogenans (strain 2CP-1 / ATCC BAA-258) protein is 6,7-dimethyl-8-ribityllumazine synthase.